A 424-amino-acid chain; its full sequence is UPF0597 protein Ssed_2537 (424 aa).

It belongs to the UPF0597 family.

This chain is UPF0597 protein Ssed_2537, found in Shewanella sediminis (strain HAW-EB3).